The primary structure comprises 331 residues: MFIKWGDRLMTKTLHLTKVTIRNFRSIKVAHINNIGDIAVFVGANESGKSNILKALNWFGTDKPLGGDDIPVEFLGKENKEYSKKPIIEAYFEIVNKDKFKEKIISNIKEILEVIKVDINEDILINFEDMLNKIQFLKFEKYADGLFKTYIYDDQLEDITKEFYDCFKNVISKKTPLDLFNLIYEEVLKEEVKKQNIPENQISNAVANIRGNPNFNNHYRKILDEIRTLNTFEEFYEICKRIENIVKSIPNTSVSISIPGRNIQLNPYNIFTEILTKFNSIVTIAFINLKPKFVYLDEEMELKGAVIKNTSWSNTLKEENKTTLLMPDFLE.

Residue 43 to 50 (GANESGKS) participates in ATP binding.

This is an uncharacterized protein from Methanocaldococcus jannaschii (strain ATCC 43067 / DSM 2661 / JAL-1 / JCM 10045 / NBRC 100440) (Methanococcus jannaschii).